Consider the following 373-residue polypeptide: 4-hydroxy-3-methylbut-2-en-1-yl diphosphate synthase (flavodoxin) (373 aa).

The [4Fe-4S] cluster site is built by cysteine 270, cysteine 273, cysteine 305, and glutamate 312.

The protein belongs to the IspG family. The cofactor is [4Fe-4S] cluster.

The enzyme catalyses (2E)-4-hydroxy-3-methylbut-2-enyl diphosphate + oxidized [flavodoxin] + H2O + 2 H(+) = 2-C-methyl-D-erythritol 2,4-cyclic diphosphate + reduced [flavodoxin]. It functions in the pathway isoprenoid biosynthesis; isopentenyl diphosphate biosynthesis via DXP pathway; isopentenyl diphosphate from 1-deoxy-D-xylulose 5-phosphate: step 5/6. Converts 2C-methyl-D-erythritol 2,4-cyclodiphosphate (ME-2,4cPP) into 1-hydroxy-2-methyl-2-(E)-butenyl 4-diphosphate. This is 4-hydroxy-3-methylbut-2-en-1-yl diphosphate synthase (flavodoxin) from Vibrio atlanticus (strain LGP32) (Vibrio splendidus (strain Mel32)).